The primary structure comprises 406 residues: Phosphopentomutase (406 aa).

Mn(2+) is bound by residues D10, D305, H310, D346, H347, and H358.

The protein belongs to the phosphopentomutase family. Mn(2+) serves as cofactor.

It is found in the cytoplasm. It carries out the reaction 2-deoxy-alpha-D-ribose 1-phosphate = 2-deoxy-D-ribose 5-phosphate. The catalysed reaction is alpha-D-ribose 1-phosphate = D-ribose 5-phosphate. Its pathway is carbohydrate degradation; 2-deoxy-D-ribose 1-phosphate degradation; D-glyceraldehyde 3-phosphate and acetaldehyde from 2-deoxy-alpha-D-ribose 1-phosphate: step 1/2. Functionally, isomerase that catalyzes the conversion of deoxy-ribose 1-phosphate (dRib-1-P) and ribose 1-phosphate (Rib-1-P) to deoxy-ribose 5-phosphate (dRib-5-P) and ribose 5-phosphate (Rib-5-P), respectively. The protein is Phosphopentomutase of Methylorubrum extorquens (strain PA1) (Methylobacterium extorquens).